We begin with the raw amino-acid sequence, 681 residues long: Spermatogenesis-associated protein 21 (681 aa).

Over residues 1–14 (MENRNTHTHPESKA) the composition is skewed to basic and acidic residues. Disordered regions lie at residues 1-284 (MENR…ANSR) and 298-336 (EEAT…VPTL). Composition is skewed to polar residues over residues 83–94 (QEPSARPRTTQD) and 159–173 (PSNS…NSPS). Basic and acidic residues predominate over residues 251-261 (PEERDTEKKEL). The span at 264–281 (GQKQRQQALSAAGTQGPA) shows a compositional bias: polar residues. Over residues 319–335 (TVTSVSTSGPISSSVPT) the composition is skewed to low complexity. Positions 464 to 499 (FTPAQVEEALMSADVNGDGHVDFKDFLAVMTDTKRF) constitute an EF-hand domain. The Ca(2+) site is built by Asp-477, Asn-479, Asp-481, His-483, and Asp-488. The interval 653-681 (LFFQPGQQGSREHSSDSRKWLSSMPARTH) is disordered. A compositionally biased stretch (basic and acidic residues) spans 662 to 671 (SREHSSDSRK).

Involved in the differentiation of haploid spermatids. The polypeptide is Spermatogenesis-associated protein 21 (Spata21) (Mus musculus (Mouse)).